We begin with the raw amino-acid sequence, 148 residues long: Large ribosomal subunit protein uL15 (148 aa).

The segment at 1-57 is disordered; sequence MRLNDVKPQKGSKKRRRRVGRGISAGQGASAGLGMRGQKSRSGSGTRPGFEGGQQPL. Positions 10–20 are enriched in basic residues; that stretch reads KGSKKRRRRVG. Residues 23–35 show a composition bias toward gly residues; sequence ISAGQGASAGLGM.

Belongs to the universal ribosomal protein uL15 family. In terms of assembly, part of the 50S ribosomal subunit.

In terms of biological role, binds to the 23S rRNA. The chain is Large ribosomal subunit protein uL15 from Trichormus variabilis (strain ATCC 29413 / PCC 7937) (Anabaena variabilis).